The sequence spans 1101 residues: Endoglucanase C (1101 aa).

A signal peptide spans 1–32; sequence MVSRRSSQARGALTAVVATLALALAGSGTALA. CBM-cenC domains follow at residues 64 to 173 and 212 to 318; these read LCVA…TFCL and MCVD…EFCI. The tract at residues 329-880 is catalytic; sequence PPPGYEPDTG…PDGCAPSACY (552 aa). Residue aspartate 506 is the Nucleophile of the active site. Histidine 831 is a catalytic residue. Residues 838–865 form a disordered region; sequence QLDPSLPSPPPGSLAGGPNSQAATWDPT. Catalysis depends on residues aspartate 882 and glutamate 891. Ig-like domains lie at 918–1006 and 1008–1097; these read TAPV…LTVE and AAPV…LAVQ.

This sequence belongs to the glycosyl hydrolase 9 (cellulase E) family.

It carries out the reaction Endohydrolysis of (1-&gt;4)-beta-D-glucosidic linkages in cellulose, lichenin and cereal beta-D-glucans.. The biological conversion of cellulose to glucose generally requires three types of hydrolytic enzymes: (1) Endoglucanases which cut internal beta-1,4-glucosidic bonds; (2) Exocellobiohydrolases that cut the disaccharide cellobiose from the non-reducing end of the cellulose polymer chain; (3) Beta-1,4-glucosidases which hydrolyze the cellobiose and other short cello-oligosaccharides to glucose. This Cellulomonas fimi (strain ATCC 484 / DSM 20113 / JCM 1341 / CCUG 24087 / LMG 16345 / NBRC 15513 / NCIMB 8980 / NCTC 7547 / NRS-133) protein is Endoglucanase C (cenC).